The following is a 479-amino-acid chain: Sucrose-6-phosphate hydrolase (479 aa).

Residues 44–47 (LLND), Gln-63, 106–107 (YS), 166–167 (RD), and Glu-223 contribute to the substrate site. Asp-47 is a catalytic residue.

The protein belongs to the glycosyl hydrolase 32 family.

It localises to the cytoplasm. The enzyme catalyses Hydrolysis of terminal non-reducing beta-D-fructofuranoside residues in beta-D-fructofuranosides.. It participates in glycan biosynthesis; sucrose metabolism. The chain is Sucrose-6-phosphate hydrolase (scrB) from Streptococcus mutans serotype c (strain ATCC 700610 / UA159).